The chain runs to 861 residues: Importin subunit beta-1 (861 aa).

The residue at position 2 (Ser-2) is an N-acetylserine. HEAT repeat units lie at residues 3–35 (TAEF…LSND), 37–66 (FLQF…LTLK), 90–129 (PEAK…ELPH), 134–164 (ELMK…YMCE), 177–208 (SNNI…LADS), 219–255 (EGER…MSLY), 260–306 (KPYM…ELAQ), 317–362 (FALS…AQNC), 367–395 (LEPV…AFGS), 402–442 (KVQR…ADSV), 452–484 (LPGV…VEQL), 496–530 (YPAL…MVEY), 536–586 (AETS…VIRK), 592–629 (EPVA…AASL), 634–669 (EKYL…ISNS), 675–713 (RRYS…ASNI), 718–764 (IPYL…IVAG), 773–812 (FPYV…IAAM), and 819–859 (KQFY…KRQL). Positions 25-106 (SETQLKKLSN…KTNALTALVS (82 aa)) constitute an Importin N-terminal domain. Ser-836 bears the Phosphoserine mark.

This sequence belongs to the importin beta family. Importin beta-1 subfamily. As to quaternary structure, forms a complex with the importin alpha subunit (SRP1/KAP60). Interacts with Ran (GSP1); interacts specifically with the GTP-bound form of Ran (GTP-Ran), protecting it from GTP hydrolysis and nucleotide exchange. Interacts with nucleoporin NUP1.

The protein resides in the cytoplasm. It is found in the nucleus. It localises to the nuclear pore complex. In terms of biological role, importin beta subunit that functions in nuclear protein import through association with the importin alpha subunit, which binds to the classical nuclear localization signal (cNLS) in cargo substrates. Docking of the importin/substrate complex to the nuclear pore complex (NPC) is mediated by importin beta through binding to nucleoporin FxFG repeats and the complex is subsequently translocated through the pore by an energy requiring, Ran-dependent mechanism. At the nucleoplasmic side of the NPC, GTP-Ran binds to importin beta and the three components separate, leading to release of the cargo. Importin alpha and beta are re-exported from the nucleus to the cytoplasm where GTP hydrolysis releases Ran from importin beta. The directionality of nuclear import is thought to be conferred by an asymmetric distribution of the GTP- and GDP-bound forms of Ran between the cytoplasm and nucleus. Mediates the nuclear import of histones H2A and H2B. Mediates the nuclear import of transcription factor GCN4. This is Importin subunit beta-1 from Saccharomyces cerevisiae (strain ATCC 204508 / S288c) (Baker's yeast).